Here is a 165-residue protein sequence, read N- to C-terminus: MFKKLFGLGSKTNEETIVAPLTGAVKNIEEVPDPVFAGRMMGDGVAIDPTEGVVVSPVDGEIVQLFHTKHAIGIKAKNGTEILIHVGLETVKMEGEGFEAHVSEGQAVKAGDKLISFDLELIREKAKSTITPIVITNTDAAESIKTTVGVAATKGSTEVMKVTMK.

The PTS EIIA type-1 domain maps to 33–137 (DPVFAGRMMG…STITPIVITN (105 aa)). Residues His70 and His85 each contribute to the Zn(2+) site. His85 (tele-phosphohistidine intermediate; for EIIA activity) is an active-site residue. His85 bears the Phosphohistidine; by HPr mark.

In terms of assembly, heterodimer with glycerol kinase (glpk). It depends on Zn(2+) as a cofactor.

It is found in the cytoplasm. In terms of biological role, the phosphoenolpyruvate-dependent sugar phosphotransferase system (sugar PTS), a major carbohydrate active transport system, catalyzes the phosphorylation of incoming sugar substrates concomitantly with their translocation across the cell membrane. The enzyme II complex composed of PtsG and Crr is involved in glucose transport. The sequence is that of PTS system glucose-specific EIIA component (crr) from Bacillus cereus (strain ATCC 14579 / DSM 31 / CCUG 7414 / JCM 2152 / NBRC 15305 / NCIMB 9373 / NCTC 2599 / NRRL B-3711).